A 566-amino-acid polypeptide reads, in one-letter code: Mannitol 2-dehydrogenase (566 aa).

Position 106-117 (106-117 (IVHVGVGGFHRA)) interacts with NAD(+).

The protein belongs to the mannitol dehydrogenase family. In terms of assembly, monomer.

It carries out the reaction D-mannitol + NAD(+) = D-fructose + NADH + H(+). Functionally, catalyzes the NAD(H)-dependent interconversion of D-fructose and D-mannitol in the mannitol metabolic pathway. The polypeptide is Mannitol 2-dehydrogenase (Pyrenophora tritici-repentis (strain Pt-1C-BFP) (Wheat tan spot fungus)).